Reading from the N-terminus, the 196-residue chain is Protein Flattop (196 aa).

Residues 107 to 196 (NGLRPEIFGK…PHAGRNLAEV (90 aa)) form a disordered region. A compositionally biased stretch (basic and acidic residues) spans 113–124 (IFGKPHDPDSQK). The span at 137 to 149 (APSPTIIPSSPAS) shows a compositional bias: low complexity. The span at 150–162 (NLSSPDQLQSSHP) shows a compositional bias: polar residues.

Belongs to the Flattop family. In terms of assembly, microtubule inner protein component of sperm flagellar doublet microtubules. Interacts with DLG3. As to expression, expressed in trachea multiciliated cells.

It is found in the cytoplasm. It localises to the cytoskeleton. The protein localises to the cilium basal body. The protein resides in the cell projection. Its subcellular location is the cilium. It is found in the apical cell membrane. It localises to the cilium axoneme. The protein localises to the flagellum axoneme. Its function is as follows. Microtubule inner protein (MIP) part of the dynein-decorated doublet microtubules (DMTs) in cilia axoneme. Acts as a regulator of cilium basal body docking and positioning in mono- and multiciliated cells. Regulates basal body docking and cilia formation in multiciliated lung cells. Regulates kinocilium positioning and stereocilia bundle morphogenesis in the inner ear. The protein is Protein Flattop of Bos taurus (Bovine).